A 2592-amino-acid chain; its full sequence is 6-hydroxymellein synthase cdmE (2592 aa).

The segment covering 1 to 11 has biased composition (basic and acidic residues); sequence MVLHPSDRRFP. Positions 1–25 are disordered; the sequence is MVLHPSDRRFPETNGVGGHSKDSSA. A Ketosynthase family 3 (KS3) domain is found at 32 to 456; it reads LEPLAIVGFA…GTNAHVVLES (425 aa). Catalysis depends on for beta-ketoacyl synthase activity residues cysteine 205, histidine 340, and histidine 379. The segment at 589–910 is malonyl-CoA:ACP transacylase (MAT) domain; sequence VFTGQGAQWP…RYSHTITRKK (322 aa). The N-terminal hotdog fold stretch occupies residues 978-1113; that stretch reads HELLGSPDPD…GFIESKCESD (136 aa). A dehydratase (DH) domain region spans residues 978-1291; sequence HELLGSPDPD…IRGTELCLLS (314 aa). A PKS/mFAS DH domain is found at 978 to 1296; that stretch reads HELLGSPDPD…LCLLSAGRGD (319 aa). A C-terminal hotdog fold region spans residues 1140–1296; sequence TQIGSISAFY…LCLLSAGRGD (157 aa). Residues isoleucine 1462 and glutamate 1484 each coordinate S-adenosyl-L-methionine. The methyltransferase (CMeT) domain stretch occupies residues 1483–1591; it reads LEIGTGFGSV…HSLLKPGGKL (109 aa). An enoyl reductase (ER) domain region spans residues 1887–2199; it reads GLLVWSDDEA…NDSNMDTAVI (313 aa). The ketoreductase (KR) domain stretch occupies residues 2223-2398; sequence ATYVIAGGLG…IPGMSVNLGN (176 aa). One can recognise a Carrier domain in the interval 2509-2586; that stretch reads VAASHVTEAI…GLSEKIARQS (78 aa). O-(pantetheine 4'-phosphoryl)serine is present on serine 2546.

The catalysed reaction is 5 malonyl-CoA + AH2 + 5 H(+) = 6-hydroxymellein + A + 5 CO2 + 5 CoA + H2O. It functions in the pathway secondary metabolite biosynthesis; terpenoid biosynthesis. Highly reducing polyketide synthase; part of the gene cluster that mediates the biosynthesis of chrodrimanin B, a meroterpenoid that acts as a potent blocker of insect GABA-gated chloride channels. The first step of the pathway is the biosynthesis of 6-hydroxymellein by the polyketide synthase cdmE. The prenyltransferase cdmH acts as a 6-hydroxymellein 5-farnesyltransferase and produces the hydrophobic metabolite verruculide C. The FAD-dependent monooxygenase cdmI further converts verruculide C into verruculide B. The terpene cyclase cdmG then produced the pentacyclic molecule 3-hydroxypentacecilide A, the backbone structure of chrodrimanin B, via folding the farnesyl moiety of the substrate into the chair-boat conformation. The short-chain dehydrogenase/reductase cdmF functions as the 3-OH dehydrogenase that oxidizes the C-3 hydroxyl group of 3-hydroxypentacecilide A and produces chrodrimanin C, the dehydrogenated product of 3-hydroxypentacecilide A. The cytochrome P450 monooxygenase cdmJ then accepts both 3-hydroxypentacecilide A and chrodrimanin C and functions as a C-7-beta-hydroxylase to produce respectively chrodrimanin H and chrodrimanin F. The dioxygenase cdmA accepts chrodrimanin H to afford chrodrimanin E, which is further transformed to chrodrimanin A by the dioxygenase cdmD. CdmA can also accept chrodrimanin C as substrate to convert it into verruculide A, which is further converted into chrodrimanin T by cdmD. The last step of the biosynthesis is proposed to be performed by the acetyltransferase cdmC which acetylates chrodrimanin A to yield chrodrimanin B. The pathway may also lead to the production of additional shunt products, including chrodrimanins T and U. The chain is 6-hydroxymellein synthase cdmE from Talaromyces verruculosus (Penicillium verruculosum).